We begin with the raw amino-acid sequence, 87 residues long: Probable Fe(2+)-trafficking protein (87 aa).

This sequence belongs to the Fe(2+)-trafficking protein family.

In terms of biological role, could be a mediator in iron transactions between iron acquisition and iron-requiring processes, such as synthesis and/or repair of Fe-S clusters in biosynthetic enzymes. The polypeptide is Probable Fe(2+)-trafficking protein (Francisella philomiragia subsp. philomiragia (strain ATCC 25017 / CCUG 19701 / FSC 153 / O#319-036)).